The sequence spans 314 residues: Peroxidase 2 (314 aa).

The first 23 residues, 1–23 (MASASSVSLMLLVAAAMASAASA), serve as a signal peptide directing secretion. Pyrrolidone carboxylic acid is present on Gln24. 4 cysteine pairs are disulfide-bonded: Cys34-Cys109, Cys67-Cys72, Cys115-Cys310, and Cys194-Cys219. The active-site Proton acceptor is the His65. Residues Asp66, Val69, Gly71, Asp73, and Ser75 each contribute to the Ca(2+) site. The N-linked (GlcNAc...) asparagine glycan is linked to Asn148. Pro157 is a substrate binding site. Asn169 carries N-linked (GlcNAc...) asparagine glycosylation. His187 provides a ligand contact to heme b. Thr188 is a binding site for Ca(2+). The N-linked (GlcNAc...) asparagine glycan is linked to Asn203. Residues Asp234, Thr237, and Asp242 each coordinate Ca(2+). Residues Asn274 and Asn309 are each glycosylated (N-linked (GlcNAc...) asparagine).

This sequence belongs to the peroxidase family. Classical plant (class III) peroxidase subfamily. The cofactor is Ca(2+). Heme b is required as a cofactor.

It is found in the secreted. The enzyme catalyses 2 a phenolic donor + H2O2 = 2 a phenolic radical donor + 2 H2O. Its function is as follows. Removal of H(2)O(2), oxidation of toxic reductants, biosynthesis and degradation of lignin, suberization, auxin catabolism, response to environmental stresses such as wounding, pathogen attack and oxidative stress. These functions might be dependent on each isozyme/isoform in each plant tissue. The sequence is that of Peroxidase 2 (PRX112) from Oryza sativa subsp. indica (Rice).